Here is a 258-residue protein sequence, read N- to C-terminus: Snake venom serine protease KN13 (258 aa).

Positions 1–18 (MVLIRVLANLLILQLSYA) are cleaved as a signal peptide. A propeptide spanning residues 19–24 (QRSSEL) is cleaved from the precursor. The region spanning 25-249 (VIGGDECNIN…HLDWIQNIIA (225 aa)) is the Peptidase S1 domain. 6 cysteine pairs are disulfide-bonded: Cys31–Cys163, Cys50–Cys66, Cys98–Cys256, Cys142–Cys210, Cys174–Cys189, and Cys200–Cys225. His65 (charge relay system) is an active-site residue. N-linked (GlcNAc...) asparagine glycosylation is present at Asn103. Residue Asp110 is the Charge relay system of the active site. Asn121, Asn122, Asn154, and Asn170 each carry an N-linked (GlcNAc...) asparagine glycan. The Charge relay system role is filled by Ser204. The N-linked (GlcNAc...) asparagine glycan is linked to Asn251.

The protein belongs to the peptidase S1 family. Snake venom subfamily. In terms of assembly, monomer. In terms of tissue distribution, expressed by the venom gland.

The protein localises to the secreted. Snake venom serine protease that may act in the hemostasis system of the prey. The chain is Snake venom serine protease KN13 from Trimeresurus stejnegeri (Chinese green tree viper).